We begin with the raw amino-acid sequence, 131 residues long: Small ribosomal subunit protein uS8c (131 aa).

This sequence belongs to the universal ribosomal protein uS8 family. Part of the 30S ribosomal subunit.

It is found in the plastid. Its subcellular location is the chloroplast. One of the primary rRNA binding proteins, it binds directly to 16S rRNA central domain where it helps coordinate assembly of the platform of the 30S subunit. This is Small ribosomal subunit protein uS8c (rps8) from Phalaenopsis aphrodite subsp. formosana (Moth orchid).